Reading from the N-terminus, the 211-residue chain is tRNA (guanine-N(7)-)-methyltransferase (211 aa).

The S-adenosyl-L-methionine site is built by E43, E68, D95, and D117. The active site involves D117. Substrate contacts are provided by residues K121, D153, and 190–193 (TEYE).

It belongs to the class I-like SAM-binding methyltransferase superfamily. TrmB family.

It carries out the reaction guanosine(46) in tRNA + S-adenosyl-L-methionine = N(7)-methylguanosine(46) in tRNA + S-adenosyl-L-homocysteine. The protein operates within tRNA modification; N(7)-methylguanine-tRNA biosynthesis. Its function is as follows. Catalyzes the formation of N(7)-methylguanine at position 46 (m7G46) in tRNA. This chain is tRNA (guanine-N(7)-)-methyltransferase, found in Staphylococcus carnosus (strain TM300).